The chain runs to 392 residues: Putative F-box protein At1g71320 (392 aa).

Positions 8–55 constitute an F-box domain; the sequence is NPKTIFIPDDIAEGIFHHLPIKSLARFKVLSKKWTSMIESTYFSHKRL.

In Arabidopsis thaliana (Mouse-ear cress), this protein is Putative F-box protein At1g71320.